The primary structure comprises 526 residues: piRNA biogenesis factor prde-1 (526 aa).

The tract at residues 436–526 (EAKEEPIDKK…RRRGCEIRRK (91 aa)) is disordered. Basic and acidic residues predominate over residues 439–448 (EEPIDKKKDP). Positions 458–467 (GKKRRGRKPK) are enriched in basic residues. The span at 468–487 (KKDDPKMELKDEVKDLKDFV) shows a compositional bias: basic and acidic residues. Residues 489 to 498 (EESTSASSSA) are compositionally biased toward low complexity.

As to expression, expressed in male and female germ cells.

The protein localises to the nucleus. It is found in the chromosome. In terms of biological role, nuclear factor required for the production of piwi-interacting RNA (piRNA) precursors. Specifically required for piRNAs produced from loci associated with the Ruby motif. Promotes binding of the transcription factor snpc-4 at piRNA genomic clusters. Required for normal fertility. In Caenorhabditis elegans, this protein is piRNA biogenesis factor prde-1.